A 397-amino-acid polypeptide reads, in one-letter code: Ribosomal RNA large subunit methyltransferase I (397 aa).

A PUA domain is found at 2–82 (TTSIYLVKGR…EVINVDFFVK (81 aa)).

Belongs to the methyltransferase superfamily. RlmI family.

It localises to the cytoplasm. It catalyses the reaction cytidine(1962) in 23S rRNA + S-adenosyl-L-methionine = 5-methylcytidine(1962) in 23S rRNA + S-adenosyl-L-homocysteine + H(+). Functionally, specifically methylates the cytosine at position 1962 (m5C1962) of 23S rRNA. This is Ribosomal RNA large subunit methyltransferase I from Photobacterium profundum (strain SS9).